The sequence spans 448 residues: Bifunctional protein GlmU (448 aa).

Residues 1 to 232 are pyrophosphorylase; sequence MSERSLLVVV…VDEVAGVNSR (232 aa). UDP-N-acetyl-alpha-D-glucosamine contacts are provided by residues 11–14, K25, Q78, and 83–84; these read LAAG and GT. Residue D108 coordinates Mg(2+). G144, E158, N173, and N230 together coordinate UDP-N-acetyl-alpha-D-glucosamine. N230 provides a ligand contact to Mg(2+). A linker region spans residues 233-253; sequence LQLAEAEAILQGRLRRAAMAG. An N-acetyltransferase region spans residues 254–448; sequence GATLVAPETV…LRAARGKPKV (195 aa). UDP-N-acetyl-alpha-D-glucosamine is bound by residues R319 and K337. The active-site Proton acceptor is the H349. The UDP-N-acetyl-alpha-D-glucosamine site is built by Y352 and N363. Residues A366, 372-373, S409, and R426 each bind acetyl-CoA; that span reads NY.

The protein in the N-terminal section; belongs to the N-acetylglucosamine-1-phosphate uridyltransferase family. It in the C-terminal section; belongs to the transferase hexapeptide repeat family. As to quaternary structure, homotrimer. The cofactor is Mg(2+).

It localises to the cytoplasm. The enzyme catalyses alpha-D-glucosamine 1-phosphate + acetyl-CoA = N-acetyl-alpha-D-glucosamine 1-phosphate + CoA + H(+). It carries out the reaction N-acetyl-alpha-D-glucosamine 1-phosphate + UTP + H(+) = UDP-N-acetyl-alpha-D-glucosamine + diphosphate. The protein operates within nucleotide-sugar biosynthesis; UDP-N-acetyl-alpha-D-glucosamine biosynthesis; N-acetyl-alpha-D-glucosamine 1-phosphate from alpha-D-glucosamine 6-phosphate (route II): step 2/2. Its pathway is nucleotide-sugar biosynthesis; UDP-N-acetyl-alpha-D-glucosamine biosynthesis; UDP-N-acetyl-alpha-D-glucosamine from N-acetyl-alpha-D-glucosamine 1-phosphate: step 1/1. It functions in the pathway bacterial outer membrane biogenesis; LPS lipid A biosynthesis. Functionally, catalyzes the last two sequential reactions in the de novo biosynthetic pathway for UDP-N-acetylglucosamine (UDP-GlcNAc). The C-terminal domain catalyzes the transfer of acetyl group from acetyl coenzyme A to glucosamine-1-phosphate (GlcN-1-P) to produce N-acetylglucosamine-1-phosphate (GlcNAc-1-P), which is converted into UDP-GlcNAc by the transfer of uridine 5-monophosphate (from uridine 5-triphosphate), a reaction catalyzed by the N-terminal domain. The sequence is that of Bifunctional protein GlmU from Azorhizobium caulinodans (strain ATCC 43989 / DSM 5975 / JCM 20966 / LMG 6465 / NBRC 14845 / NCIMB 13405 / ORS 571).